Here is a 313-residue protein sequence, read N- to C-terminus: Protein-methionine-sulfoxide reductase catalytic subunit MsrP (313 aa).

Positions 1 to 44 form a signal peptide, tat-type signal; it reads MARWRPDMAEREATPEALYLRRRDFLALGAAGAVGLLLPRGARA. Mo-molybdopterin-binding positions include Asn-76, 79 to 80, Cys-134, Thr-169, Asn-217, Arg-222, and 233 to 235; these read YE and GAK.

This sequence belongs to the MsrP family. In terms of assembly, heterodimer of a catalytic subunit (MsrP) and a heme-binding subunit (MsrQ). Mo-molybdopterin is required as a cofactor. Predicted to be exported by the Tat system. The position of the signal peptide cleavage has not been experimentally proven.

Its subcellular location is the periplasm. The enzyme catalyses L-methionyl-[protein] + a quinone + H2O = L-methionyl-(S)-S-oxide-[protein] + a quinol. The catalysed reaction is L-methionyl-[protein] + a quinone + H2O = L-methionyl-(R)-S-oxide-[protein] + a quinol. Functionally, part of the MsrPQ system that repairs oxidized periplasmic proteins containing methionine sulfoxide residues (Met-O), using respiratory chain electrons. Thus protects these proteins from oxidative-stress damage caused by reactive species of oxygen and chlorine generated by the host defense mechanisms. MsrPQ is essential for the maintenance of envelope integrity under bleach stress, rescuing a wide series of structurally unrelated periplasmic proteins from methionine oxidation. The catalytic subunit MsrP is non-stereospecific, being able to reduce both (R-) and (S-) diastereoisomers of methionine sulfoxide. The protein is Protein-methionine-sulfoxide reductase catalytic subunit MsrP of Anaeromyxobacter dehalogenans (strain 2CP-1 / ATCC BAA-258).